We begin with the raw amino-acid sequence, 205 residues long: NADH-quinone oxidoreductase subunit J (205 aa).

5 consecutive transmembrane segments (helical) span residues 1–21, 26–46, 54–74, 89–109, and 142–162; these read MPIFFYLFTTLIIISSLCVVL, VYSVLWLIFTFINAAGLMILL, LLIVIYVGAVAVLFLFVIMML, LSLSIFITLIMFVDLVITVIL, and FMLPFQMAGLILFVAMISCIT.

This sequence belongs to the complex I subunit 6 family.

Its subcellular location is the cell membrane. The enzyme catalyses a quinone + NADH + 5 H(+)(in) = a quinol + NAD(+) + 4 H(+)(out). Functionally, NDH-1 shuttles electrons from NADH, via FMN and iron-sulfur (Fe-S) centers, to quinones in the respiratory chain. Couples the redox reaction to proton translocation (for every two electrons transferred, four hydrogen ions are translocated across the cytoplasmic membrane), and thus conserves the redox energy in a proton gradient. This is NADH-quinone oxidoreductase subunit J (nuoJ) from Rickettsia typhi (strain ATCC VR-144 / Wilmington).